The sequence spans 350 residues: D-alanine--D-alanine ligase (350 aa).

An ATP-grasp domain is found at 135–335; it reads KLYAKNLGVK…LAQSLPKTPK (201 aa). 164–219 contributes to the ATP binding site; that stretch reads KPSFNFPFIVKPNNAGSSLGVSVVKEEKELAYALDGAFEYSKEVLIEPFIQRVKEY. Residues aspartate 291, glutamate 303, and asparagine 305 each contribute to the Mg(2+) site.

Belongs to the D-alanine--D-alanine ligase family. Mg(2+) is required as a cofactor. It depends on Mn(2+) as a cofactor.

The protein localises to the cytoplasm. The catalysed reaction is 2 D-alanine + ATP = D-alanyl-D-alanine + ADP + phosphate + H(+). Its pathway is cell wall biogenesis; peptidoglycan biosynthesis. Its function is as follows. Cell wall formation. This chain is D-alanine--D-alanine ligase, found in Helicobacter acinonychis (strain Sheeba).